The following is a 998-amino-acid chain: RNA-directed RNA polymerase (998 aa).

2 interaction with host mitochondria outer membrane regions span residues 1–67 and 233–250; these read MTLK…DKTK and VRTS…RMIG. The homomultimerization stretch occupies residues 1–400; it reads MTLKVILGEH…KPTMPRVHWP (400 aa). Residues 17–34 form a helical membrane-spanning segment; it reads LLVGIATVSGCGAVVYCI. A cytoplasmic region spans residues 35 to 998; the sequence is SKFWGYGAIA…AQPQPSNNRK (964 aa). Positions 91–282 are capping; that stretch reads NGHAVSGAVR…LVYTIPQYVI (192 aa). The active-site For RdRp/TNTase activity is aspartate 692. Residues 700 to 800 form a homomultimerization region; it reads IQKSINRAAK…MVLRLYGPTA (101 aa). The segment at 901 to 998 is disordered; the sequence is AKQTRANPGT…AQPQPSNNRK (98 aa). Polar residues-rich tracts occupy residues 904–913 and 947–961; these read TRANPGTSRP and GKTN…TAGE. Residues 971–984 show a composition bias toward basic residues; it reads KGPRGGKTNTRRTP.

Belongs to the nodaviridae RNA polymerase family. In terms of assembly, homododecamer. Forms 2 stacked rings of 35-nm in diameter, arranged in a crown-like structure at the opening of virus-induced replication vesicles. Interacts with protein B2. Mn(2+) is required as a cofactor.

The protein localises to the host mitochondrion outer membrane. The catalysed reaction is RNA(n) + a ribonucleoside 5'-triphosphate = RNA(n+1) + diphosphate. With respect to regulation, drastically inhibited by phosphonoacetic acid. Only slightly inhibited by gliotoxin. Its function is as follows. RNA-dependent RNA polymerase, which replicates the viral genome composed of 2 RNA segments, RNA1 and RNA2. Does not need an exogenous primer. Also possesses a terminal nucleotidyl transferase (TNTase) activity. The TNTase catalyzes the addition of nucleotide to the 3'-end of plus- and minus-stranded RNAs, probably to repair the 3'-end nucleotide loss. Forms the open necked connection to the cytosol of the virus-induced replication vesicles. Mediates viral RNA1 recruitment. The protein is RNA-directed RNA polymerase of Costelytra zealandica (Greater wax moth).